Consider the following 267-residue polypeptide: Hemin import ATP-binding protein HmuV (267 aa).

The ABC transporter domain occupies 3–243 (LEVRGIEVWR…ELVARVFGLR (241 aa)). 35-42 (GPNGAGKS) lines the ATP pocket.

Belongs to the ABC transporter superfamily. Heme (hemin) importer (TC 3.A.1.14.5) family. In terms of assembly, the complex is composed of two ATP-binding proteins (HmuV), two transmembrane proteins (HmuU) and a solute-binding protein (HmuT).

The protein resides in the cell inner membrane. Part of the ABC transporter complex HmuTUV involved in hemin import. Responsible for energy coupling to the transport system. This chain is Hemin import ATP-binding protein HmuV, found in Myxococcus xanthus (strain DK1622).